We begin with the raw amino-acid sequence, 325 residues long: ATP phosphoribosyltransferase (325 aa).

This sequence belongs to the ATP phosphoribosyltransferase family. Long subfamily. The cofactor is Mg(2+).

The protein localises to the cytoplasm. It catalyses the reaction 1-(5-phospho-beta-D-ribosyl)-ATP + diphosphate = 5-phospho-alpha-D-ribose 1-diphosphate + ATP. It functions in the pathway amino-acid biosynthesis; L-histidine biosynthesis; L-histidine from 5-phospho-alpha-D-ribose 1-diphosphate: step 1/9. Its activity is regulated as follows. Feedback inhibited by histidine. In terms of biological role, catalyzes the condensation of ATP and 5-phosphoribose 1-diphosphate to form N'-(5'-phosphoribosyl)-ATP (PR-ATP). Has a crucial role in the pathway because the rate of histidine biosynthesis seems to be controlled primarily by regulation of HisG enzymatic activity. The chain is ATP phosphoribosyltransferase from Nitrobacter hamburgensis (strain DSM 10229 / NCIMB 13809 / X14).